A 230-amino-acid chain; its full sequence is Orotidine 5'-phosphate decarboxylase (230 aa).

Substrate contacts are provided by residues Asp10, Lys32, Asp59 to Thr68, Thr119, Arg180, Gln189, Gly209, and Arg210. The active-site Proton donor is the Lys61.

Belongs to the OMP decarboxylase family. Type 1 subfamily. As to quaternary structure, homodimer.

It catalyses the reaction orotidine 5'-phosphate + H(+) = UMP + CO2. It participates in pyrimidine metabolism; UMP biosynthesis via de novo pathway; UMP from orotate: step 2/2. Functionally, catalyzes the decarboxylation of orotidine 5'-monophosphate (OMP) to uridine 5'-monophosphate (UMP). The protein is Orotidine 5'-phosphate decarboxylase of Glaesserella parasuis serovar 5 (strain SH0165) (Haemophilus parasuis).